The primary structure comprises 173 residues: MAIILGVDPGSRITGYGVIQCQGRQQIYLGSGCIRTSADDLPQRLQQIYAGLCEIITQYKPDEFAIERVFMAKNADSALKLGQARGAAIVAATCAGLPVAEYSATQIKSAVVGTGRAQKTQVQHMIKQLLKLPASPQADAADALGVAICHFHTYQSLIAMGGKASSRTYGRYK.

Active-site residues include Asp8, Glu67, and Asp139. Positions 8, 67, and 139 each coordinate Mg(2+).

It belongs to the RuvC family. Homodimer which binds Holliday junction (HJ) DNA. The HJ becomes 2-fold symmetrical on binding to RuvC with unstacked arms; it has a different conformation from HJ DNA in complex with RuvA. In the full resolvosome a probable DNA-RuvA(4)-RuvB(12)-RuvC(2) complex forms which resolves the HJ. Mg(2+) is required as a cofactor.

The protein localises to the cytoplasm. It catalyses the reaction Endonucleolytic cleavage at a junction such as a reciprocal single-stranded crossover between two homologous DNA duplexes (Holliday junction).. In terms of biological role, the RuvA-RuvB-RuvC complex processes Holliday junction (HJ) DNA during genetic recombination and DNA repair. Endonuclease that resolves HJ intermediates. Cleaves cruciform DNA by making single-stranded nicks across the HJ at symmetrical positions within the homologous arms, yielding a 5'-phosphate and a 3'-hydroxyl group; requires a central core of homology in the junction. The consensus cleavage sequence is 5'-(A/T)TT(C/G)-3'. Cleavage occurs on the 3'-side of the TT dinucleotide at the point of strand exchange. HJ branch migration catalyzed by RuvA-RuvB allows RuvC to scan DNA until it finds its consensus sequence, where it cleaves and resolves the cruciform DNA. This chain is Crossover junction endodeoxyribonuclease RuvC, found in Shewanella frigidimarina (strain NCIMB 400).